A 118-amino-acid chain; its full sequence is Protein RALF-like 24 (118 aa).

The N-terminal stretch at 1–22 is a signal peptide; that stretch reads MSRSLALVYLSLLCLQTHLSIS. Residues 23–63 constitute a propeptide, removed in mature form; that stretch reads VTVPIPSVNGEIDAMLNRNGVIGEEEGEEMMPSEISRRVMM. 2 cysteine pairs are disulfide-bonded: Cys81–Cys91 and Cys103–Cys109.

The protein belongs to the plant rapid alkalinization factor (RALF) family. Proteolytically cleaved, probably by S1P, a subtilisin-like serine protease (subtilase).

It localises to the secreted. Cell signaling peptide that may regulate plant stress, growth, and development. Mediates a rapid alkalinization of extracellular space by mediating a transient increase in the cytoplasmic Ca(2+) concentration leading to a calcium-dependent signaling events through a cell surface receptor and a concomitant activation of some intracellular mitogen-activated protein kinases. The chain is Protein RALF-like 24 (RALFL24) from Arabidopsis thaliana (Mouse-ear cress).